The chain runs to 298 residues: Tyrosine recombinase XerD (298 aa).

Positions 3-88 (TLEHPLIDRF…GLRGFYRYCL (86 aa)) constitute a Core-binding (CB) domain. Positions 109 to 292 (PLPKSLSEAD…ARARLQDLHA (184 aa)) constitute a Tyr recombinase domain. Active-site residues include Arg149, Lys173, His244, Arg247, and His270. The active-site O-(3'-phospho-DNA)-tyrosine intermediate is Tyr279.

It belongs to the 'phage' integrase family. XerD subfamily. As to quaternary structure, forms a cyclic heterotetrameric complex composed of two molecules of XerC and two molecules of XerD.

It localises to the cytoplasm. Functionally, site-specific tyrosine recombinase, which acts by catalyzing the cutting and rejoining of the recombining DNA molecules. The XerC-XerD complex is essential to convert dimers of the bacterial chromosome into monomers to permit their segregation at cell division. It also contributes to the segregational stability of plasmids. This is Tyrosine recombinase XerD from Pseudomonas aeruginosa (strain ATCC 15692 / DSM 22644 / CIP 104116 / JCM 14847 / LMG 12228 / 1C / PRS 101 / PAO1).